Here is a 379-residue protein sequence, read N- to C-terminus: MKQLEKLIIEAKILTEPEAEVERVMQVCNACRYCEGFCAVFPAMTQRLEFGKADINYLANLCHNCGACLHACQYAPPHEFAINVPKAMAEVRLETYQHYAQPAAFGALYRQAGVTVTLALVFSLILFLLLAMGLKGSLLHPPLAGDFYQIFPHNLLAWMFGSVFMLAIGLLMAGVIRFWREISPVGPRPAEIAEASHNALTLKYLDGGHGKGCNEADDAFTLMRRRFHHFTFYGFMLCFAATVVATGYHYFAGWEAPYPFFSVPVMLGTLGGIGLIVGPAGLLWLNLKRSSLHGDARQKPMDRGFILLLLLTSLTGIGLLAGRDTSWMGILLAIHLGVVMALFLTIPYGKFAHGFYRCASLLKWAIEKRRGKQAGVAGD.

[4Fe-4S] cluster contacts are provided by cysteine 28, cysteine 31, cysteine 34, cysteine 38, cysteine 62, cysteine 65, cysteine 68, and cysteine 72.

The protein is Citrate utilization protein B (citB) of Escherichia coli.